Here is a 416-residue protein sequence, read N- to C-terminus: UDP-N-acetylglucosamine 1-carboxyvinyltransferase (416 aa).

22-23 contributes to the phosphoenolpyruvate binding site; the sequence is KN. R92 is a UDP-N-acetyl-alpha-D-glucosamine binding site. The active-site Proton donor is C116. 2-(S-cysteinyl)pyruvic acid O-phosphothioketal is present on C116. UDP-N-acetyl-alpha-D-glucosamine contacts are provided by residues 121–125, D304, and I326; that span reads RPVDQ.

It belongs to the EPSP synthase family. MurA subfamily.

The protein resides in the cytoplasm. It catalyses the reaction phosphoenolpyruvate + UDP-N-acetyl-alpha-D-glucosamine = UDP-N-acetyl-3-O-(1-carboxyvinyl)-alpha-D-glucosamine + phosphate. It participates in cell wall biogenesis; peptidoglycan biosynthesis. Functionally, cell wall formation. Adds enolpyruvyl to UDP-N-acetylglucosamine. In Janthinobacterium sp. (strain Marseille) (Minibacterium massiliensis), this protein is UDP-N-acetylglucosamine 1-carboxyvinyltransferase.